Reading from the N-terminus, the 296-residue chain is Elongation factor Ts (296 aa).

An involved in Mg(2+) ion dislocation from EF-Tu region spans residues Thr79–Val82.

The protein belongs to the EF-Ts family.

It localises to the cytoplasm. In terms of biological role, associates with the EF-Tu.GDP complex and induces the exchange of GDP to GTP. It remains bound to the aminoacyl-tRNA.EF-Tu.GTP complex up to the GTP hydrolysis stage on the ribosome. This is Elongation factor Ts (tsf) from Spiroplasma citri.